A 117-amino-acid polypeptide reads, in one-letter code: Large ribosomal subunit protein bL20 (117 aa).

The protein belongs to the bacterial ribosomal protein bL20 family.

Functionally, binds directly to 23S ribosomal RNA and is necessary for the in vitro assembly process of the 50S ribosomal subunit. It is not involved in the protein synthesizing functions of that subunit. In Symbiobacterium thermophilum (strain DSM 24528 / JCM 14929 / IAM 14863 / T), this protein is Large ribosomal subunit protein bL20.